The primary structure comprises 131 residues: MDKNLLEAVKFDEKGLVCAIAQDAETKRVLMVAWMNAEALQKTVETGFAHYYSRSRQKQWMKGEESGHTQKVRELRLDCDGDAIVMLIAQNGGIACHTGRESCFYKVWRGSAWETADAVLKDEKEIYGSTH.

Residue D78 participates in Mg(2+) binding. Residue C79 participates in Zn(2+) binding. Residues D80 and D82 each coordinate Mg(2+). Zn(2+)-binding residues include C96 and C103.

The protein belongs to the PRA-CH family. Homodimer. Mg(2+) serves as cofactor. Zn(2+) is required as a cofactor.

It localises to the cytoplasm. It catalyses the reaction 1-(5-phospho-beta-D-ribosyl)-5'-AMP + H2O = 1-(5-phospho-beta-D-ribosyl)-5-[(5-phospho-beta-D-ribosylamino)methylideneamino]imidazole-4-carboxamide. It participates in amino-acid biosynthesis; L-histidine biosynthesis; L-histidine from 5-phospho-alpha-D-ribose 1-diphosphate: step 3/9. Catalyzes the hydrolysis of the adenine ring of phosphoribosyl-AMP. The protein is Phosphoribosyl-AMP cyclohydrolase of Neisseria meningitidis serogroup C / serotype 2a (strain ATCC 700532 / DSM 15464 / FAM18).